The following is a 397-amino-acid chain: CCA-adding enzyme (397 aa).

Residues Gly-8 and Arg-11 each contribute to the ATP site. Positions 8 and 11 each coordinate CTP. Glu-21 and Asp-23 together coordinate Mg(2+). Arg-91, Arg-137, and Arg-140 together coordinate ATP. CTP contacts are provided by Arg-91, Arg-137, and Arg-140. Positions 213-324 (NLDAAIATLK…LALFNGCDAW (112 aa)) constitute an HD domain.

Belongs to the tRNA nucleotidyltransferase/poly(A) polymerase family. Bacterial CCA-adding enzyme type 2 subfamily. Requires Mg(2+) as cofactor.

The catalysed reaction is a tRNA precursor + 2 CTP + ATP = a tRNA with a 3' CCA end + 3 diphosphate. It carries out the reaction a tRNA with a 3' CCA end + 2 CTP + ATP = a tRNA with a 3' CCACCA end + 3 diphosphate. Catalyzes the addition and repair of the essential 3'-terminal CCA sequence in tRNAs without using a nucleic acid template. Adds these three nucleotides in the order of C, C, and A to the tRNA nucleotide-73, using CTP and ATP as substrates and producing inorganic pyrophosphate. tRNA 3'-terminal CCA addition is required both for tRNA processing and repair. Also involved in tRNA surveillance by mediating tandem CCA addition to generate a CCACCA at the 3' terminus of unstable tRNAs. While stable tRNAs receive only 3'-terminal CCA, unstable tRNAs are marked with CCACCA and rapidly degraded. This Alteromonas mediterranea (strain DSM 17117 / CIP 110805 / LMG 28347 / Deep ecotype) protein is CCA-adding enzyme.